The following is a 361-amino-acid chain: D-alanine--D-alanine ligase (361 aa).

Residues 134–344 (KLLLKSFNIP…FKDLVDNLIN (211 aa)) enclose the ATP-grasp domain. 167-222 (REALGYPVIVKPAVLGSSIGINVAYSENQIEFFIEEALKYDLTILIEKFIEAREIE) contacts ATP. Positions 297, 311, and 313 each coordinate Mg(2+).

Belongs to the D-alanine--D-alanine ligase family. The cofactor is Mg(2+). It depends on Mn(2+) as a cofactor.

Its subcellular location is the cytoplasm. It carries out the reaction 2 D-alanine + ATP = D-alanyl-D-alanine + ADP + phosphate + H(+). It functions in the pathway cell wall biogenesis; peptidoglycan biosynthesis. Functionally, cell wall formation. This Borrelia garinii subsp. bavariensis (strain ATCC BAA-2496 / DSM 23469 / PBi) (Borreliella bavariensis) protein is D-alanine--D-alanine ligase.